Here is a 240-residue protein sequence, read N- to C-terminus: RNA-binding protein pno1 (240 aa).

Residues 1–15 (MEAENIRADAFEPAK) are compositionally biased toward basic and acidic residues. Residues 1 to 61 (MEAENIRADA…APPKAKRARS (61 aa)) form a disordered region. In terms of domain architecture, KH spans 164–213 (QSRAIGRLAGKGGRTKFTIENVTKTRIVLADSKIHILGSYQNIQLARRAV).

It belongs to the PNO1 family.

It is found in the nucleus. The protein resides in the nucleolus. This is RNA-binding protein pno1 (l(1)G0004) from Drosophila melanogaster (Fruit fly).